Reading from the N-terminus, the 35-residue chain is Peptide Hact-3 (35 aa).

In terms of tissue distribution, expressed in tentacles.

The protein localises to the nematocyst. It localises to the secreted. Its function is as follows. Peptide with unknown function. Does not exhibit antimicrobial activity against Escherichia coli and Staphylococcus aureus. This chain is Peptide Hact-3, found in Heliofungia actiniformis (Mushroom coral).